A 233-amino-acid chain; its full sequence is Phosphoribosylformylglycinamidine synthase subunit PurQ (233 aa).

Residues 3–233 (SAVLVFPGIN…GLVAHLERAA (231 aa)) form the Glutamine amidotransferase type-1 domain. Cysteine 87 serves as the catalytic Nucleophile. Active-site residues include histidine 204 and glutamate 206.

In terms of assembly, part of the FGAM synthase complex composed of 1 PurL, 1 PurQ and 2 PurS subunits.

It localises to the cytoplasm. It carries out the reaction N(2)-formyl-N(1)-(5-phospho-beta-D-ribosyl)glycinamide + L-glutamine + ATP + H2O = 2-formamido-N(1)-(5-O-phospho-beta-D-ribosyl)acetamidine + L-glutamate + ADP + phosphate + H(+). The enzyme catalyses L-glutamine + H2O = L-glutamate + NH4(+). Its pathway is purine metabolism; IMP biosynthesis via de novo pathway; 5-amino-1-(5-phospho-D-ribosyl)imidazole from N(2)-formyl-N(1)-(5-phospho-D-ribosyl)glycinamide: step 1/2. In terms of biological role, part of the phosphoribosylformylglycinamidine synthase complex involved in the purines biosynthetic pathway. Catalyzes the ATP-dependent conversion of formylglycinamide ribonucleotide (FGAR) and glutamine to yield formylglycinamidine ribonucleotide (FGAM) and glutamate. The FGAM synthase complex is composed of three subunits. PurQ produces an ammonia molecule by converting glutamine to glutamate. PurL transfers the ammonia molecule to FGAR to form FGAM in an ATP-dependent manner. PurS interacts with PurQ and PurL and is thought to assist in the transfer of the ammonia molecule from PurQ to PurL. This chain is Phosphoribosylformylglycinamidine synthase subunit PurQ, found in Nitrobacter winogradskyi (strain ATCC 25391 / DSM 10237 / CIP 104748 / NCIMB 11846 / Nb-255).